Reading from the N-terminus, the 156-residue chain is 6,7-dimethyl-8-ribityllumazine synthase (156 aa).

Residues Phe23, 57–59, and 81–83 contribute to the 5-amino-6-(D-ribitylamino)uracil site; these read AFE and AVI. 86–87 contributes to the (2S)-2-hydroxy-3-oxobutyl phosphate binding site; the sequence is AT. His89 (proton donor) is an active-site residue. A 5-amino-6-(D-ribitylamino)uracil-binding site is contributed by Phe114. Arg128 is a binding site for (2S)-2-hydroxy-3-oxobutyl phosphate.

This sequence belongs to the DMRL synthase family.

It catalyses the reaction (2S)-2-hydroxy-3-oxobutyl phosphate + 5-amino-6-(D-ribitylamino)uracil = 6,7-dimethyl-8-(1-D-ribityl)lumazine + phosphate + 2 H2O + H(+). Its pathway is cofactor biosynthesis; riboflavin biosynthesis; riboflavin from 2-hydroxy-3-oxobutyl phosphate and 5-amino-6-(D-ribitylamino)uracil: step 1/2. Its function is as follows. Catalyzes the formation of 6,7-dimethyl-8-ribityllumazine by condensation of 5-amino-6-(D-ribitylamino)uracil with 3,4-dihydroxy-2-butanone 4-phosphate. This is the penultimate step in the biosynthesis of riboflavin. The protein is 6,7-dimethyl-8-ribityllumazine synthase of Campylobacter concisus (strain 13826).